The sequence spans 382 residues: Glutamyl-tRNA reductase (382 aa).

Residues 38–41, Ser85, 90–92, and Gln96 each bind substrate; these read TCNR and ENQ. Cys39 serves as the catalytic Nucleophile. 164–169 contacts NADP(+); that stretch reads GAGEIG.

Belongs to the glutamyl-tRNA reductase family. As to quaternary structure, homodimer.

The catalysed reaction is (S)-4-amino-5-oxopentanoate + tRNA(Glu) + NADP(+) = L-glutamyl-tRNA(Glu) + NADPH + H(+). Its pathway is porphyrin-containing compound metabolism; protoporphyrin-IX biosynthesis; 5-aminolevulinate from L-glutamyl-tRNA(Glu): step 1/2. In terms of biological role, catalyzes the NADPH-dependent reduction of glutamyl-tRNA(Glu) to glutamate 1-semialdehyde (GSA). The chain is Glutamyl-tRNA reductase from Methanococcus maripaludis (strain C7 / ATCC BAA-1331).